The sequence spans 607 residues: Fucose-1-phosphate guanylyltransferase (607 aa).

Residues 1-21 (MRAVRRGLREGGAMAAARDPP) are disordered.

In terms of tissue distribution, expressed in many tissues.

The protein resides in the cytoplasm. The enzyme catalyses beta-L-fucose 1-phosphate + GTP + H(+) = GDP-beta-L-fucose + diphosphate. Its function is as follows. Catalyzes the formation of GDP-L-fucose from GTP and L-fucose-1-phosphate. Functions as a salvage pathway to reutilize L-fucose arising from the turnover of glycoproteins and glycolipids. This Homo sapiens (Human) protein is Fucose-1-phosphate guanylyltransferase.